Consider the following 290-residue polypeptide: Phosphatidylglycerol--prolipoprotein diacylglyceryl transferase (290 aa).

7 helical membrane passes run 21–41, 60–80, 96–116, 124–144, 199–219, 226–246, and 260–280; these read VSLHWYGLMYLVGFVFAMWLA, LLYAGFLGVFIGGRVGYVLFY, WDGGMSFHGGLIGVICVMLWF, FFQVADFIAPLIPFGLGAGRL, SQLYEMILEGVVLFIILNVFI, GSVSGLFLIGYGTFRIIVECF, and ISMGQILSVPMILAGIIMMIW. A 1,2-diacyl-sn-glycero-3-phospho-(1'-sn-glycerol) is bound at residue R143.

This sequence belongs to the Lgt family.

The protein localises to the cell inner membrane. It catalyses the reaction L-cysteinyl-[prolipoprotein] + a 1,2-diacyl-sn-glycero-3-phospho-(1'-sn-glycerol) = an S-1,2-diacyl-sn-glyceryl-L-cysteinyl-[prolipoprotein] + sn-glycerol 1-phosphate + H(+). It participates in protein modification; lipoprotein biosynthesis (diacylglyceryl transfer). Functionally, catalyzes the transfer of the diacylglyceryl group from phosphatidylglycerol to the sulfhydryl group of the N-terminal cysteine of a prolipoprotein, the first step in the formation of mature lipoproteins. This Yersinia pseudotuberculosis serotype O:1b (strain IP 31758) protein is Phosphatidylglycerol--prolipoprotein diacylglyceryl transferase.